The sequence spans 647 residues: DNA topoisomerase 4 subunit B (647 aa).

ATP contacts are provided by residues tyrosine 11, asparagine 51, aspartate 78, 118 to 124, and lysine 344; that span reads GLHGVGS. Positions 391-401 are enriched in basic and acidic residues; it reads AARKARDESRN. The segment at 391–421 is disordered; the sequence is AARKARDESRNGKKNKKDKGLLSGKLTPAQS. Residues 427–541 enclose the Toprim domain; it reads NELYLVEGDS…AGHVYIALPP (115 aa). Residues glutamate 433, aspartate 506, and aspartate 508 each coordinate Mg(2+).

Belongs to the type II topoisomerase family. ParE type 2 subfamily. Heterotetramer composed of ParC and ParE. Mg(2+) is required as a cofactor. Mn(2+) serves as cofactor. It depends on Ca(2+) as a cofactor.

The catalysed reaction is ATP-dependent breakage, passage and rejoining of double-stranded DNA.. Inhibited by quinolones, such as levofloxacin. Its function is as follows. Topoisomerase IV is essential for chromosome segregation. It relaxes supercoiled DNA. Performs the decatenation events required during the replication of a circular DNA molecule. The polypeptide is DNA topoisomerase 4 subunit B (Streptococcus pneumoniae serotype 4 (strain ATCC BAA-334 / TIGR4)).